A 796-amino-acid polypeptide reads, in one-letter code: Protein translocase subunit SecA 2 (796 aa).

Residues Gln84, 102–106 (GEGKT), and Asp496 each bind ATP.

This sequence belongs to the SecA family. As to quaternary structure, monomer and homodimer. Part of the essential Sec protein translocation apparatus which comprises SecA, SecYEG and auxiliary proteins SecDF. Other proteins may also be involved.

It is found in the cell membrane. The protein localises to the cytoplasm. It carries out the reaction ATP + H2O + cellular proteinSide 1 = ADP + phosphate + cellular proteinSide 2.. Functionally, part of the Sec protein translocase complex. Interacts with the SecYEG preprotein conducting channel. Has a central role in coupling the hydrolysis of ATP to the transfer of proteins into and across the cell membrane, serving as an ATP-driven molecular motor driving the stepwise translocation of polypeptide chains across the membrane. The protein is Protein translocase subunit SecA 2 of Staphylococcus haemolyticus (strain JCSC1435).